The following is a 254-amino-acid chain: Ribonuclease PH (254 aa).

Phosphate contacts are provided by residues Arg86 and 124–126 (GTR).

Belongs to the RNase PH family. In terms of assembly, homohexameric ring arranged as a trimer of dimers.

It carries out the reaction tRNA(n+1) + phosphate = tRNA(n) + a ribonucleoside 5'-diphosphate. Phosphorolytic 3'-5' exoribonuclease that plays an important role in tRNA 3'-end maturation. Removes nucleotide residues following the 3'-CCA terminus of tRNAs; can also add nucleotides to the ends of RNA molecules by using nucleoside diphosphates as substrates, but this may not be physiologically important. Probably plays a role in initiation of 16S rRNA degradation (leading to ribosome degradation) during starvation. This chain is Ribonuclease PH, found in Carboxydothermus hydrogenoformans (strain ATCC BAA-161 / DSM 6008 / Z-2901).